We begin with the raw amino-acid sequence, 426 residues long: Proline--tRNA ligase (426 aa).

This sequence belongs to the class-II aminoacyl-tRNA synthetase family. ProS type 2 subfamily. Homodimer.

It localises to the cytoplasm. The catalysed reaction is tRNA(Pro) + L-proline + ATP = L-prolyl-tRNA(Pro) + AMP + diphosphate. Functionally, catalyzes the attachment of proline to tRNA(Pro) in a two-step reaction: proline is first activated by ATP to form Pro-AMP and then transferred to the acceptor end of tRNA(Pro). This chain is Proline--tRNA ligase, found in Rickettsia peacockii (strain Rustic).